A 376-amino-acid polypeptide reads, in one-letter code: Chaperone protein DnaJ (376 aa).

The J domain occupies 4–68; sequence DYYDILGVDR…DTRSRYDQFG (65 aa). The segment at 135–217 adopts a CR-type zinc-finger fold; it reads GGEKEIRIPH…CNGAGRRQVT (83 aa). Zn(2+) is bound by residues cysteine 148, cysteine 151, cysteine 165, cysteine 168, cysteine 191, cysteine 194, cysteine 205, and cysteine 208. CXXCXGXG motif repeat units follow at residues 148 to 155, 165 to 172, 191 to 198, and 205 to 212; these read CQVCKGDG, CSTCNGQG, CPACNGQG, and CEVCNGAG.

Belongs to the DnaJ family. As to quaternary structure, homodimer. The cofactor is Zn(2+).

It is found in the cytoplasm. Participates actively in the response to hyperosmotic and heat shock by preventing the aggregation of stress-denatured proteins and by disaggregating proteins, also in an autonomous, DnaK-independent fashion. Unfolded proteins bind initially to DnaJ; upon interaction with the DnaJ-bound protein, DnaK hydrolyzes its bound ATP, resulting in the formation of a stable complex. GrpE releases ADP from DnaK; ATP binding to DnaK triggers the release of the substrate protein, thus completing the reaction cycle. Several rounds of ATP-dependent interactions between DnaJ, DnaK and GrpE are required for fully efficient folding. Also involved, together with DnaK and GrpE, in the DNA replication of plasmids through activation of initiation proteins. This Crocosphaera subtropica (strain ATCC 51142 / BH68) (Cyanothece sp. (strain ATCC 51142)) protein is Chaperone protein DnaJ.